The following is a 231-amino-acid chain: Urease subunit gamma/beta (231 aa).

The interval 1–101 (MLLTPTELER…LVTVHQPIRP (101 aa)) is urease gamma. Positions 102–231 (GKLPLAVMPT…RARAQHFKGA (130 aa)) are urease beta.

The protein in the N-terminal section; belongs to the urease gamma subunit family. It in the C-terminal section; belongs to the urease beta subunit family. Heterohexamer of 3 UreC (alpha) and 3 UreAB (gamma/beta) subunits.

It localises to the cytoplasm. The enzyme catalyses urea + 2 H2O + H(+) = hydrogencarbonate + 2 NH4(+). It functions in the pathway nitrogen metabolism; urea degradation; CO(2) and NH(3) from urea (urease route): step 1/1. The chain is Urease subunit gamma/beta from Pseudomonas syringae pv. tomato (strain ATCC BAA-871 / DC3000).